A 160-amino-acid polypeptide reads, in one-letter code: Serine-protein kinase RsbW (160 aa).

Belongs to the anti-sigma-factor family.

It catalyses the reaction L-seryl-[protein] + ATP = O-phospho-L-seryl-[protein] + ADP + H(+). The enzyme catalyses L-threonyl-[protein] + ATP = O-phospho-L-threonyl-[protein] + ADP + H(+). In terms of biological role, negative regulator of sigma-B activity. Phosphorylates and inactivates its specific antagonist protein, RsbV. Upon phosphorylation of RsbV, RsbW is released and binds to sigma-B, thereby blocking its ability to form an RNA polymerase holoenzyme (E-sigma-B). In Bacillus cereus (strain G9842), this protein is Serine-protein kinase RsbW.